The chain runs to 269 residues: Ubiquinone/menaquinone biosynthesis C-methyltransferase UbiE (269 aa).

Residues Thr-92, Asp-113, and 141–142 each bind S-adenosyl-L-methionine; that span reads NA.

Belongs to the class I-like SAM-binding methyltransferase superfamily. MenG/UbiE family.

It catalyses the reaction a 2-demethylmenaquinol + S-adenosyl-L-methionine = a menaquinol + S-adenosyl-L-homocysteine + H(+). The catalysed reaction is a 2-methoxy-6-(all-trans-polyprenyl)benzene-1,4-diol + S-adenosyl-L-methionine = a 5-methoxy-2-methyl-3-(all-trans-polyprenyl)benzene-1,4-diol + S-adenosyl-L-homocysteine + H(+). The protein operates within quinol/quinone metabolism; menaquinone biosynthesis; menaquinol from 1,4-dihydroxy-2-naphthoate: step 2/2. It functions in the pathway cofactor biosynthesis; ubiquinone biosynthesis. Functionally, methyltransferase required for the conversion of demethylmenaquinol (DMKH2) to menaquinol (MKH2) and the conversion of 2-polyprenyl-6-methoxy-1,4-benzoquinol (DDMQH2) to 2-polyprenyl-3-methyl-6-methoxy-1,4-benzoquinol (DMQH2). This chain is Ubiquinone/menaquinone biosynthesis C-methyltransferase UbiE, found in Brucella melitensis biotype 2 (strain ATCC 23457).